Here is a 415-residue protein sequence, read N- to C-terminus: Gamma-glutamyl phosphate reductase (415 aa).

This sequence belongs to the gamma-glutamyl phosphate reductase family.

It is found in the cytoplasm. It catalyses the reaction L-glutamate 5-semialdehyde + phosphate + NADP(+) = L-glutamyl 5-phosphate + NADPH + H(+). Its pathway is amino-acid biosynthesis; L-proline biosynthesis; L-glutamate 5-semialdehyde from L-glutamate: step 2/2. In terms of biological role, catalyzes the NADPH-dependent reduction of L-glutamate 5-phosphate into L-glutamate 5-semialdehyde and phosphate. The product spontaneously undergoes cyclization to form 1-pyrroline-5-carboxylate. This chain is Gamma-glutamyl phosphate reductase, found in Shouchella clausii (strain KSM-K16) (Alkalihalobacillus clausii).